The following is a 444-amino-acid chain: tRNA (guanine-N(7)-)-methyltransferase non-catalytic subunit TRM82 (444 aa).

WD repeat units lie at residues 1–47 (MSVI…WSDD), 48–99 (FDKI…LGAP), 100–147 (PIYS…KRFC), 148–192 (FSKR…EPIL), 193–237 (GHVS…DKWL), 238–279 (FGHK…STFD), and 308–354 (FAVS…ITFP). The tract at residues 55–92 (RNTTAKEQQGQSSENENENKKLKSNKGDSIKRTAAKVP) is disordered. A compositionally biased stretch (basic and acidic residues) spans 71 to 85 (NENKKLKSNKGDSIK). Residue Ser93 is modified to Phosphoserine.

This sequence belongs to the WD repeat TRM82 family. As to quaternary structure, forms a heterodimer with the catalytic subunit TRM8.

It localises to the nucleus. It functions in the pathway tRNA modification; N(7)-methylguanine-tRNA biosynthesis. Functionally, required for the formation of N(7)-methylguanine at position 46 (m7G46) in tRNA, a modification required to maintain stability of tRNAs; its absence resulting in tRNA decay. In the complex, it is required to stabilize and induce conformational changes of the catalytic subunit. The polypeptide is tRNA (guanine-N(7)-)-methyltransferase non-catalytic subunit TRM82 (Saccharomyces cerevisiae (strain RM11-1a) (Baker's yeast)).